The chain runs to 163 residues: UPF0260 protein GOX1406 (163 aa).

It belongs to the UPF0260 family.

This chain is UPF0260 protein GOX1406, found in Gluconobacter oxydans (strain 621H) (Gluconobacter suboxydans).